We begin with the raw amino-acid sequence, 275 residues long: Dermonecrotic toxin LruSicTox-alphaIV1 (275 aa).

H5 is an active-site residue. 2 residues coordinate Mg(2+): E25 and D27. Catalysis depends on H41, which acts as the Nucleophile. 2 disulfide bridges follow: C45–C51 and C47–C192. D85 is a binding site for Mg(2+).

This sequence belongs to the arthropod phospholipase D family. Class II subfamily. Mg(2+) is required as a cofactor. As to expression, expressed by the venom gland.

The protein resides in the secreted. It carries out the reaction an N-(acyl)-sphingosylphosphocholine = an N-(acyl)-sphingosyl-1,3-cyclic phosphate + choline. The enzyme catalyses an N-(acyl)-sphingosylphosphoethanolamine = an N-(acyl)-sphingosyl-1,3-cyclic phosphate + ethanolamine. The catalysed reaction is a 1-acyl-sn-glycero-3-phosphocholine = a 1-acyl-sn-glycero-2,3-cyclic phosphate + choline. It catalyses the reaction a 1-acyl-sn-glycero-3-phosphoethanolamine = a 1-acyl-sn-glycero-2,3-cyclic phosphate + ethanolamine. Functionally, dermonecrotic toxins cleave the phosphodiester linkage between the phosphate and headgroup of certain phospholipids (sphingolipid and lysolipid substrates), forming an alcohol (often choline) and a cyclic phosphate. This toxin acts on sphingomyelin (SM). It may also act on ceramide phosphoethanolamine (CPE), lysophosphatidylcholine (LPC) and lysophosphatidylethanolamine (LPE), but not on lysophosphatidylserine (LPS), and lysophosphatidylglycerol (LPG). It acts by transphosphatidylation, releasing exclusively cyclic phosphate products as second products. Induces dermonecrosis, hemolysis, increased vascular permeability, edema, inflammatory response, and platelet aggregation. In Loxosceles rufescens (Mediterranean recluse spider), this protein is Dermonecrotic toxin LruSicTox-alphaIV1.